The following is a 520-amino-acid chain: Anthranilate synthase component 1 (520 aa).

L-tryptophan contacts are provided by residues Ser40 and 291 to 293; that span reads PYM. Residue 328-329 coordinates chorismate; it reads GT. Glu361 provides a ligand contact to Mg(2+). Chorismate contacts are provided by residues Tyr449, Arg469, 483 to 485, and Gly485; that span reads GAG. A Mg(2+)-binding site is contributed by Glu498.

It belongs to the anthranilate synthase component I family. As to quaternary structure, heterotetramer consisting of two non-identical subunits: a beta subunit (TrpG) and a large lpha subunit (TrpE). Mg(2+) serves as cofactor.

The catalysed reaction is chorismate + L-glutamine = anthranilate + pyruvate + L-glutamate + H(+). It participates in amino-acid biosynthesis; L-tryptophan biosynthesis; L-tryptophan from chorismate: step 1/5. Its activity is regulated as follows. Cooperatively feedback inhibited by tryptophan. Functionally, part of a heterotetrameric complex that catalyzes the two-step biosynthesis of anthranilate, an intermediate in the biosynthesis of L-tryptophan. In the first step, the glutamine-binding beta subunit (TrpG) of anthranilate synthase (AS) provides the glutamine amidotransferase activity which generates ammonia as a substrate that, along with chorismate, is used in the second step, catalyzed by the large alpha subunit of AS (TrpE) to produce anthranilate. In the absence of TrpG, TrpE can synthesize anthranilate directly from chorismate and high concentrations of ammonia. This is Anthranilate synthase component 1 (trpE) from Escherichia coli (strain K12).